The following is a 183-amino-acid chain: MDFYSLFLIAIALSLDAFGVALCIGLNNNVDLKYKSSCAIYFGFFQFLFAIIGGYAGFLFNKYIATMPQIVGGVVICIVGIIMIKEGIENEDSCKILKPGMNIILGISVSIDAMVVGFTALNKIQSGLLILRDTLFIGIVTLFVSILAFITSKYLKKIDVIGKYADYIGGIILIFFGLKMIFF.

Transmembrane regions (helical) follow at residues 6 to 26, 40 to 60, 64 to 84, 101 to 121, 135 to 155, and 158 to 178; these read LFLI…CIGL, IYFG…GFLF, IATM…IIMI, MNII…FTAL, LFIG…SKYL, and IDVI…FFGL.

It belongs to the MntP (TC 9.B.29) family.

The protein localises to the cell membrane. In terms of biological role, probably functions as a manganese efflux pump. In Clostridium tetani (strain Massachusetts / E88), this protein is Putative manganese efflux pump MntP.